Here is a 247-residue protein sequence, read N- to C-terminus: uncharacterized protein (247 aa).

NAD(+) contacts are provided by leucine 19, aspartate 38, aspartate 63, and valine 64. Residue serine 142 participates in substrate binding. NAD(+)-binding residues include tyrosine 155, lysine 159, and serine 190. Tyrosine 155 serves as the catalytic Proton acceptor.

This sequence belongs to the short-chain dehydrogenases/reductases (SDR) family.

This is an uncharacterized protein from Mycobacterium bovis (strain ATCC BAA-935 / AF2122/97).